An 81-amino-acid polypeptide reads, in one-letter code: Photosystem I iron-sulfur center (81 aa).

4Fe-4S ferredoxin-type domains are found at residues 2–31 and 39–68; these read AHTVKIYDTCIGCTQCVRACPTDVLEMVPW and IASAPRTEDCVGCKRCESACPTDFLSIRVY. Cysteine 11, cysteine 14, cysteine 17, cysteine 21, cysteine 48, cysteine 51, cysteine 54, and cysteine 58 together coordinate [4Fe-4S] cluster.

As to quaternary structure, the eukaryotic PSI reaction center is composed of at least 11 subunits. [4Fe-4S] cluster is required as a cofactor.

Its subcellular location is the plastid. The protein localises to the cyanelle thylakoid membrane. It catalyses the reaction reduced [plastocyanin] + hnu + oxidized [2Fe-2S]-[ferredoxin] = oxidized [plastocyanin] + reduced [2Fe-2S]-[ferredoxin]. Functionally, apoprotein for the two 4Fe-4S centers FA and FB of photosystem I (PSI); essential for photochemical activity. FB is the terminal electron acceptor of PSI, donating electrons to ferredoxin. The C-terminus interacts with PsaA/B/D and helps assemble the protein into the PSI complex. Required for binding of PsaD and PsaE to PSI. PSI is a cytochrome c6-ferredoxin oxidoreductase, converting photonic excitation into a charge separation, which transfers an electron from the donor P700 chlorophyll pair to the spectroscopically characterized acceptors A0, A1, FX, FA and FB in turn. In Cyanophora paradoxa, this protein is Photosystem I iron-sulfur center.